The following is a 382-amino-acid chain: RIB43A-like with coiled-coils protein 2 (382 aa).

Positions N222–D255 form a coiled coil.

This sequence belongs to the RIB43A family. Microtubule inner protein component of sperm flagellar doublet microtubules. In terms of tissue distribution, expressed in airway epithelial cells.

It is found in the cytoplasm. It localises to the cytoskeleton. Its subcellular location is the cilium axoneme. The protein resides in the flagellum axoneme. Its function is as follows. Microtubule inner protein (MIP) part of the dynein-decorated doublet microtubules (DMTs) in cilia axoneme, which is required for motile cilia beating. The sequence is that of RIB43A-like with coiled-coils protein 2 from Homo sapiens (Human).